Consider the following 68-residue polypeptide: Non-disulfide-bridged peptide 5.6 (68 aa).

An N-terminal signal peptide occupies residues 1–23; sequence MKTQVIIFIMAVVFLQLLSQSEA. Positions 37 to 68 are excised as a propeptide; the sequence is ELRNIDLDQFDDMFDEPEISAADMRFLQELLK.

Belongs to the non-disulfide-bridged peptide (NDBP) superfamily. Short antimicrobial peptide (group 4) family. As to expression, expressed by the venom gland.

It localises to the secreted. The protein localises to the target cell membrane. Its function is as follows. Antibacterial peptide with activity against both Gram-positive and Gram-negative bacteria probably by forming pores in the cell membrane. Also has weak hemolytic activity. Does not show antifungal activity. This is Non-disulfide-bridged peptide 5.6 from Hoffmannihadrurus gertschi (Scorpion).